The sequence spans 760 residues: Polyribonucleotide nucleotidyltransferase (760 aa).

Positions 492 and 498 each coordinate Mg(2+). The region spanning 559-618 (PQHAEVFVNPDIIRIIIGPGGKNIKAITATTGASIDIEDSGRVSIFAPTLEAMEMAREMV) is the KH domain. Residues 628 to 702 (GKNYTGKVRK…SRKAVLLEEQ (75 aa)) form the S1 motif domain. The segment at 706–760 (WKPEDTARPSGPREGGRRDGGRDGRRDGGRDGRRDGGRDGGRRDGGRRDGGRDRN) is disordered. Basic and acidic residues predominate over residues 719–760 (EGGRRDGGRDGRRDGGRDGRRDGGRDGGRRDGGRRDGGRDRN).

It belongs to the polyribonucleotide nucleotidyltransferase family. The cofactor is Mg(2+).

It is found in the cytoplasm. The enzyme catalyses RNA(n+1) + phosphate = RNA(n) + a ribonucleoside 5'-diphosphate. Functionally, involved in mRNA degradation. Catalyzes the phosphorolysis of single-stranded polyribonucleotides processively in the 3'- to 5'-direction. The chain is Polyribonucleotide nucleotidyltransferase from Nitratidesulfovibrio vulgaris (strain ATCC 29579 / DSM 644 / CCUG 34227 / NCIMB 8303 / VKM B-1760 / Hildenborough) (Desulfovibrio vulgaris).